The following is a 741-amino-acid chain: uncharacterized protein (741 aa).

The stretch at V64–V103 forms a coiled coil. Over residues F137–L155 the composition is skewed to polar residues. Disordered stretches follow at residues F137–P214, R280–S318, and S330–P364. Composition is skewed to low complexity over residues R161–T173 and K197–A209. The segment covering S298 to P308 has biased composition (polar residues). Composition is skewed to low complexity over residues S309–S318 and S330–S344. The segment covering P346–A356 has biased composition (polar residues). G499–T506 lines the ATP pocket.

Belongs to the AAA ATPase family.

It localises to the cytoplasm. Its subcellular location is the nucleus. This is an uncharacterized protein from Schizosaccharomyces pombe (strain 972 / ATCC 24843) (Fission yeast).